A 336-amino-acid chain; its full sequence is DNA-directed RNA polymerase subunit alpha (336 aa).

Residues 1–232 (MIQKNWQELI…DQLGVFVNFD (232 aa)) are alpha N-terminal domain (alpha-NTD). Positions 248–336 (FNPALLKKVD…DLAKRYEDQY (89 aa)) are alpha C-terminal domain (alpha-CTD).

The protein belongs to the RNA polymerase alpha chain family. In terms of assembly, homodimer. The RNAP catalytic core consists of 2 alpha, 1 beta, 1 beta' and 1 omega subunit. When a sigma factor is associated with the core the holoenzyme is formed, which can initiate transcription.

The enzyme catalyses RNA(n) + a ribonucleoside 5'-triphosphate = RNA(n+1) + diphosphate. DNA-dependent RNA polymerase catalyzes the transcription of DNA into RNA using the four ribonucleoside triphosphates as substrates. The polypeptide is DNA-directed RNA polymerase subunit alpha (Rhizobium rhizogenes (strain K84 / ATCC BAA-868) (Agrobacterium radiobacter)).